The primary structure comprises 551 residues: DNA mismatch repair protein MutL (551 aa).

This sequence belongs to the DNA mismatch repair MutL/HexB family.

This protein is involved in the repair of mismatches in DNA. It is required for dam-dependent methyl-directed DNA mismatch repair. May act as a 'molecular matchmaker', a protein that promotes the formation of a stable complex between two or more DNA-binding proteins in an ATP-dependent manner without itself being part of a final effector complex. The protein is DNA mismatch repair protein MutL of Thermosipho melanesiensis (strain DSM 12029 / CIP 104789 / BI429).